The chain runs to 105 residues: Thioredoxin-like protein slr0233 (105 aa).

The 102-residue stretch at 1–102 folds into the Thioredoxin domain; it reads MAVKKQFANF…QAAQLIQQLQ (102 aa). C30 and C33 are disulfide-bonded.

This sequence belongs to the thioredoxin family.

In Synechocystis sp. (strain ATCC 27184 / PCC 6803 / Kazusa), this protein is Thioredoxin-like protein slr0233.